Consider the following 268-residue polypeptide: Phosphate import ATP-binding protein PstB 2 (268 aa).

An ABC transporter domain is found at 19–263 (YKVRNMAFFY…PKDKRTEDYI (245 aa)). 51–58 (GPSGCGKS) contacts ATP.

The protein belongs to the ABC transporter superfamily. Phosphate importer (TC 3.A.1.7) family. The complex is composed of two ATP-binding proteins (PstB), two transmembrane proteins (PstC and PstA) and a solute-binding protein (PstS).

The protein resides in the cell inner membrane. The enzyme catalyses phosphate(out) + ATP + H2O = ADP + 2 phosphate(in) + H(+). Functionally, part of the ABC transporter complex PstSACB involved in phosphate import. Responsible for energy coupling to the transport system. The chain is Phosphate import ATP-binding protein PstB 2 from Gloeobacter violaceus (strain ATCC 29082 / PCC 7421).